Reading from the N-terminus, the 192-residue chain is Fe/S biogenesis protein NfuA (192 aa).

Cysteine 149 and cysteine 152 together coordinate [4Fe-4S] cluster.

Belongs to the NfuA family. Homodimer. [4Fe-4S] cluster serves as cofactor.

Involved in iron-sulfur cluster biogenesis. Binds a 4Fe-4S cluster, can transfer this cluster to apoproteins, and thereby intervenes in the maturation of Fe/S proteins. Could also act as a scaffold/chaperone for damaged Fe/S proteins. This is Fe/S biogenesis protein NfuA from Tolumonas auensis (strain DSM 9187 / NBRC 110442 / TA 4).